The chain runs to 243 residues: UPF0246 protein MGAS10750_Spy1880 (243 aa).

The protein belongs to the UPF0246 family.

The polypeptide is UPF0246 protein MGAS10750_Spy1880 (Streptococcus pyogenes serotype M4 (strain MGAS10750)).